Consider the following 457-residue polypeptide: uncharacterized protein (457 aa).

An N-terminal signal peptide occupies residues 1-18 (MKLLISLLWSIFFSIVYS). The Lumenal segment spans residues 19 to 173 (EKTLLNFKHY…GGLPASQFPR (155 aa)). The helical transmembrane segment at 174-194 (MPISGGITIAYSVILALWMFF) threads the bilayer. The Cytoplasmic portion of the chain corresponds to 195 to 207 (RFQYKHSIVTVQK). The chain crosses the membrane as a helical span at residues 208–228 (AIMFLLIFSCAQQAVTSIVLD). Over 229–243 (TENLRNRGNFTWLGE) the chain is Lumenal. Residues 244-264 (TLVSILFACQLVLDLALLLIL) traverse the membrane as a helical segment. Residues 265–284 (SWGYTRYSTNMRDRLFTEAK) are Cytoplasmic-facing. A helical membrane pass occupies residues 285-305 (IPLIICFFALFVVRFFAITIQ). Residues 306-314 (SIHLGLWFC) lie on the Lumenal side of the membrane. The chain crosses the membrane as a helical span at residues 315–335 (FFFLTACISALYILFGAFVAL). Residues 336 to 358 (PSTLRALVEQRYYTLHSIYKIFR) lie on the Cytoplasmic side of the membrane. A helical transmembrane segment spans residues 359–379 (IMVLCGVVTIFSFSLVALIFC). The Lumenal segment spans residues 380 to 457 (SNTNNNSTNK…EEDIRADKSK (78 aa)).

Belongs to the LU7TM family.

The protein resides in the endoplasmic reticulum membrane. This is an uncharacterized protein from Schizosaccharomyces pombe (strain 972 / ATCC 24843) (Fission yeast).